A 336-amino-acid polypeptide reads, in one-letter code: 4-hydroxythreonine-4-phosphate dehydrogenase (336 aa).

Residues H142 and T143 each coordinate substrate. A divalent metal cation is bound by residues H172, H217, and H274. The substrate site is built by K282, N291, and R300.

This sequence belongs to the PdxA family. As to quaternary structure, homodimer. Zn(2+) serves as cofactor. Requires Mg(2+) as cofactor. The cofactor is Co(2+).

Its subcellular location is the cytoplasm. The enzyme catalyses 4-(phosphooxy)-L-threonine + NAD(+) = 3-amino-2-oxopropyl phosphate + CO2 + NADH. Its pathway is cofactor biosynthesis; pyridoxine 5'-phosphate biosynthesis; pyridoxine 5'-phosphate from D-erythrose 4-phosphate: step 4/5. Functionally, catalyzes the NAD(P)-dependent oxidation of 4-(phosphooxy)-L-threonine (HTP) into 2-amino-3-oxo-4-(phosphooxy)butyric acid which spontaneously decarboxylates to form 3-amino-2-oxopropyl phosphate (AHAP). The polypeptide is 4-hydroxythreonine-4-phosphate dehydrogenase (Trichlorobacter lovleyi (strain ATCC BAA-1151 / DSM 17278 / SZ) (Geobacter lovleyi)).